We begin with the raw amino-acid sequence, 499 residues long: AP-1-like transcription factor CAP1 (499 aa).

The disordered stretch occupies residues 1–64; that stretch reads MTDIKRNFSD…RAYRERKERK (64 aa). Short sequence motifs (bipartite nuclear localization signal) lie at residues 20–27 and 44–51; these read TKKLHVDS and SKRTAQNR. The 64-residue stretch at 40–103 folds into the bZIP domain; that stretch reads TEPKSKRTAQ…DVLKNELAKY (64 aa). Residues 43 to 66 form a basic motif region; sequence KSKRTAQNRAAQRAYRERKERKMK. Positions 49–105 form a coiled coil; that stretch reads QNRAAQRAYRERKERKMKELEDKVRLLEDANVRALTETDFLRAQVDVLKNELAKYTG. The segment at 68–75 is leucine-zipper; that stretch reads LEDKVRLL. The disordered stretch occupies residues 104–215; it reads TGGSDFSDLN…SSTPLNDNLL (112 aa). A compositionally biased stretch (polar residues) spans 123–148; sequence HPNNHHSNVSTGTPHGSMSSSNSVAS. Composition is skewed to low complexity over residues 155–164 and 186–215; these read SSASSVSNNS and QQQQ…DNLL. The interval 254–261 is n-CRD; sequence CVKLNEAC. 2 disulfide bridges follow: C254–C446 and C261–C477. The disordered stretch occupies residues 408-442; that stretch reads PEKQEKGKYEPPSTSKTTNNNEEEDKDEVVPAPPQ. Positions 417–427 are enriched in low complexity; the sequence is EPPSTSKTTNN. The interval 446–477 is c-CRD; sequence CSEIWDRITSHPKYTELDIDGLCNELKSKAKC. Positions 462–469 match the Nuclear export signal motif; sequence LDIDGLCN.

Belongs to the bZIP family. YAP subfamily. Interacts with YBP1. Upon oxidative stress, is oxidated by the peroxidase GPX3 and stabilized by YBP1. Oxidative stress induces conformational changes through oxidation of cysteine residues, masking the nuclear export signal, thus abolishing nuclear export by CRM1/exportin 1. Post-translationally, phosphorylated in response to H(2)O(2).

Its subcellular location is the nucleus. It is found in the cytoplasm. Functionally, transcription activator involved in multidrug resistance, oxidative stress response, and redox homeostasis. Preferentially binds to promoters with the core binding site 5'-TTA[CG]TAA-3'. Involved in the oxidative stress response in via multiple pathways, including the cellular antioxidant defense system, carbohydrate metabolism and energy metabolism, protein degradation, ATP-dependent RNA helicase, and resistance pathways. The ability of the major systemic fungal pathogen of humans to sense and respond to reactive oxygen species, such as H(2)O(2) generated by the host immune system, is required for survival in the host and therefore virulence. Regulates the transcription of COR33, GLR1, GTO1, GTT1, GTT1, TRR1, TRX1, SOD1, CAT1, and the transcription regulator TSA1. Participates in the apoptosis by regulating the expression of the glutathione reductase gene and glutathione content. Also plays a role in the peroxide-mediated induction of MDR1 and other drug response genes such as PDR16, MDR1, FLU1, YCF1, and FCR1. Regulates trehalose accumulation which is important for the oxidative stress tolerance. Recruits ADA2 to its target promoters. Activity of CAP1 is controlled through oxidation of specific cysteine residues resulting in the alteration of its subcellular location. Oxidative stress induces nuclear accumulation and as a result CAP1 transcriptional activity. Nuclear export is restored when disulfide bonds are reduced by thioredoxin, whose expression is controlled by CAP1, providing a mechanism for negative autoregulation. This chain is AP-1-like transcription factor CAP1, found in Candida albicans (strain SC5314 / ATCC MYA-2876) (Yeast).